Here is a 282-residue protein sequence, read N- to C-terminus: Aldo-keto reductase ML1669 (282 aa).

Tyr-57 (proton donor) is an active-site residue. The NADPH site is built by Leu-197, Val-235, Arg-237, Ser-238, Ala-239, Ser-246, Asn-247, and Arg-273.

The protein belongs to the aldo/keto reductase family.

The protein is Aldo-keto reductase ML1669 of Mycobacterium leprae (strain TN).